Reading from the N-terminus, the 281-residue chain is Pantothenate synthetase (281 aa).

30–37 provides a ligand contact to ATP; the sequence is MGNLHLGH. The active-site Proton donor is histidine 37. A (R)-pantoate-binding site is contributed by glutamine 61. Residue glutamine 61 coordinates beta-alanine. 149-152 serves as a coordination point for ATP; it reads GRKD. Glutamine 155 contributes to the (R)-pantoate binding site. ATP contacts are provided by residues isoleucine 178 and 186–189; that span reads MSSR.

This sequence belongs to the pantothenate synthetase family. In terms of assembly, homodimer.

Its subcellular location is the cytoplasm. It carries out the reaction (R)-pantoate + beta-alanine + ATP = (R)-pantothenate + AMP + diphosphate + H(+). It participates in cofactor biosynthesis; (R)-pantothenate biosynthesis; (R)-pantothenate from (R)-pantoate and beta-alanine: step 1/1. Its function is as follows. Catalyzes the condensation of pantoate with beta-alanine in an ATP-dependent reaction via a pantoyl-adenylate intermediate. In Shewanella sediminis (strain HAW-EB3), this protein is Pantothenate synthetase.